The sequence spans 168 residues: MKAHRRHIREKIVQALYTLDVRDTDTATAGDWLITPEISKDPKAIRFFKQLLGAIVDNREEIDQYISKHTFNWDMSRIAIIDKNILRMAMAEILYFEDIPPKVSINEAIEIAKKFNSTDKSSKFVNGILDAVYNDLNKSGKINKCGRGLIDQSSNLKKNKEKSPSDDQ.

Belongs to the NusB family.

Its function is as follows. Involved in transcription antitermination. Required for transcription of ribosomal RNA (rRNA) genes. Binds specifically to the boxA antiterminator sequence of the ribosomal RNA (rrn) operons. The chain is Transcription antitermination protein NusB from Prosthecochloris aestuarii (strain DSM 271 / SK 413).